The primary structure comprises 379 residues: Cytochrome b (379 aa).

4 helical membrane passes run 33 to 53 (FGSL…FLAM), 77 to 98 (WLIR…YLHI), 113 to 133 (WNIG…GYVL), and 178 to 198 (FFAF…LHLL). 2 residues coordinate heme b: His83 and His97. Residues His182 and His196 each coordinate heme b. His201 contributes to the a ubiquinone binding site. Helical transmembrane passes span 226–246 (YKDL…ALFY), 288–308 (LGGV…PILH), 320–340 (ASQL…WIGG), and 347–367 (YIII…VLNP).

This sequence belongs to the cytochrome b family. As to quaternary structure, the cytochrome bc1 complex contains 3 respiratory subunits (MT-CYB, CYC1 and UQCRFS1), 2 core proteins (UQCRC1 and UQCRC2) and probably 6 low-molecular weight proteins. The cofactor is heme b.

Its subcellular location is the mitochondrion inner membrane. Functionally, component of the ubiquinol-cytochrome c reductase complex (complex III or cytochrome b-c1 complex) that is part of the mitochondrial respiratory chain. The b-c1 complex mediates electron transfer from ubiquinol to cytochrome c. Contributes to the generation of a proton gradient across the mitochondrial membrane that is then used for ATP synthesis. The polypeptide is Cytochrome b (mt-cyb) (Anguilla rostrata (American eel)).